The chain runs to 1098 residues: PAN2-PAN3 deadenylation complex catalytic subunit PAN2 (1098 aa).

4 WD repeats span residues 19-58, 150-190, 253-293, and 300-338; these read ASKD…PFQL, TGFD…SVKS, PFPN…KLNV, and PASP…NFVN. Residues 340–466 are linker; that stretch reads PAPLEEQDIP…SIFHLKSPTS (127 aa). The segment at 417–442 is disordered; it reads RNISQPYQSLREPPGSNSNAPRFISE. The USP domain maps to 466–839; it reads SVPHCYSRLQ…KPVIIVYSEP (374 aa). Residues 894–1067 enclose the Exonuclease domain; that stretch reads IAIDAEFVVS…EDAYTALMLF (174 aa). The a divalent metal cation site is built by Asp-897, Glu-899, Asp-1006, and Asp-1059.

Belongs to the peptidase C19 family. PAN2 subfamily. In terms of assembly, forms a heterotrimer with an asymmetric homodimer of the regulatory subunit PAN3 to form the poly(A)-nuclease (PAN) deadenylation complex. Requires a divalent metal cation as cofactor.

The protein resides in the cytoplasm. The enzyme catalyses Exonucleolytic cleavage of poly(A) to 5'-AMP.. Positively regulated by the regulatory subunit PAN3. Functionally, catalytic subunit of the poly(A)-nuclease (PAN) deadenylation complex, one of two cytoplasmic mRNA deadenylases involved in mRNA turnover. PAN specifically shortens poly(A) tails of RNA and the activity is stimulated by poly(A)-binding protein PAB1. PAN deadenylation is followed by rapid degradation of the shortened mRNA tails by the CCR4-NOT complex. Deadenylated mRNAs are then degraded by two alternative mechanisms, namely exosome-mediated 3'-5' exonucleolytic degradation, or deadenylation-dependent mRNA decaping and subsequent 5'-3' exonucleolytic degradation by XRN1. May also be involved in post-transcriptional maturation of mRNA poly(A) tails. This Meyerozyma guilliermondii (strain ATCC 6260 / CBS 566 / DSM 6381 / JCM 1539 / NBRC 10279 / NRRL Y-324) (Yeast) protein is PAN2-PAN3 deadenylation complex catalytic subunit PAN2.